Consider the following 240-residue polypeptide: Probable transcriptional regulatory protein HPG27_148 (240 aa).

Belongs to the TACO1 family.

The protein resides in the cytoplasm. The polypeptide is Probable transcriptional regulatory protein HPG27_148 (Helicobacter pylori (strain G27)).